The following is a 619-amino-acid chain: Phosphoenolpyruvate carboxykinase [GTP] (619 aa).

Substrate is bound by residues Arg-81 and 230–232 (YGG). Mn(2+) contacts are provided by Lys-239 and His-259. A substrate-binding site is contributed by Ser-281. GTP is bound at residue 282–287 (ACGKTN). The active site involves Cys-283. Asp-306 is a Mn(2+) binding site. Substrate is bound at residue 399 to 401 (NSR). Residues Arg-401, Arg-432, and 525 to 528 (YGQN) each bind GTP.

Belongs to the phosphoenolpyruvate carboxykinase [GTP] family. As to quaternary structure, monomer. Requires Mn(2+) as cofactor.

The catalysed reaction is oxaloacetate + GTP = phosphoenolpyruvate + GDP + CO2. In terms of biological role, in parasitic nematodes PEPCK carboxylates phosphoenolpyruvate to oxaloacetate thus introducing the products of glycolysis to mitochondrial metabolism. Catalyzes the conversion of oxaloacetate (OAA) to phosphoenolpyruvate (PEP), the rate-limiting step in the metabolic pathway that produces glucose from lactate and other precursors derived from the citric acid cycle. The protein is Phosphoenolpyruvate carboxykinase [GTP] (PEPCK) of Haemonchus contortus (Barber pole worm).